The following is a 577-amino-acid chain: Arginine--tRNA ligase (577 aa).

The 'HIGH' region motif lies at 122-132 (PNVAKEMHVGH).

This sequence belongs to the class-I aminoacyl-tRNA synthetase family. As to quaternary structure, monomer.

Its subcellular location is the cytoplasm. The catalysed reaction is tRNA(Arg) + L-arginine + ATP = L-arginyl-tRNA(Arg) + AMP + diphosphate. The protein is Arginine--tRNA ligase of Aliivibrio fischeri (strain ATCC 700601 / ES114) (Vibrio fischeri).